The primary structure comprises 205 residues: Ribosomal RNA small subunit methyltransferase G (205 aa).

S-adenosyl-L-methionine-binding positions include glycine 73, leucine 78, 124–125, and arginine 138; that span reads VE.

Belongs to the methyltransferase superfamily. RNA methyltransferase RsmG family.

Its subcellular location is the cytoplasm. It carries out the reaction guanosine(527) in 16S rRNA + S-adenosyl-L-methionine = N(7)-methylguanosine(527) in 16S rRNA + S-adenosyl-L-homocysteine. In terms of biological role, specifically methylates the N7 position of guanine in position 527 of 16S rRNA. The protein is Ribosomal RNA small subunit methyltransferase G of Actinobacillus pleuropneumoniae serotype 7 (strain AP76).